The chain runs to 389 residues: MSHRKFEHPRHGSLGFLPRKRSSRHRGKVKSFPKDDVSKPCHLTSFVGYKAGMTHIVREVEKPGSKLHKKETCEAVTIIETPPLVIVGLVAYVKTPRGLRSLNSVWAQHLSEEVRRRFYKNWCKSKKKAFTKYALKYDSDAGKKEIQMQLEKMKKYASIVRVIAHTQIRKMKGLKQKKAHLMEIQINGGTIADKVDYGYKFFEKEIPVDAVFQKDEMIDIIGVTKGKGYEGVVTRWGVTRLPRKTHRGLRKVACIGAWHPARVSYTVARAGQNGYHHRTEMNKKVYKIGKSGQESHAACTEFDRTEKDITPMGGFPHYGVVKGDYLMIKGCCVGPKKRVVTLRQSLLKQTSRLALEEIKLKFIDTSSKFGHGRFQTTDEKQRFFGKLKA.

The interval 1 to 36 (MSHRKFEHPRHGSLGFLPRKRSSRHRGKVKSFPKDD) is disordered. Residues 18–31 (PRKRSSRHRGKVKS) show a composition bias toward basic residues.

Belongs to the universal ribosomal protein uL3 family.

It localises to the cytoplasm. Functionally, the L3 protein is a component of the large subunit of cytoplasmic ribosomes. The polypeptide is Large ribosomal subunit protein uL3 (RPL3) (Oryza sativa subsp. japonica (Rice)).